A 157-amino-acid chain; its full sequence is MSQVILDLQIACADSQGLPTEGDFQRWLEAVLPLFQPVSEVTIRLVDEAESHDLNLTYRGKDKSTNVLSFPFEAPPEIELPLLGDLIICRQVVEKEAIEQEKALLAHWAHMVVHGSLHLLGYDHIDDDEAEEMELIEIEIMHGLGYPDPYISEKDPD.

Zn(2+) is bound by residues His114, His118, and His124.

The protein belongs to the endoribonuclease YbeY family. Requires Zn(2+) as cofactor.

It is found in the cytoplasm. Its function is as follows. Single strand-specific metallo-endoribonuclease involved in late-stage 70S ribosome quality control and in maturation of the 3' terminus of the 16S rRNA. The chain is Endoribonuclease YbeY from Yersinia pseudotuberculosis serotype O:3 (strain YPIII).